A 437-amino-acid chain; its full sequence is Photosystem II stability/assembly factor HCF136, chloroplastic (437 aa).

The protein belongs to the Ycf48 family.

It localises to the plastid. The protein localises to the chloroplast thylakoid membrane. Its function is as follows. Essential for photosystem II (PSII) biogenesis; required for assembly of an early intermediate in PSII assembly that includes D2 (psbD) and cytochrome b559. The chain is Photosystem II stability/assembly factor HCF136, chloroplastic from Cyanidioschyzon merolae (strain NIES-3377 / 10D) (Unicellular red alga).